Reading from the N-terminus, the 136-residue chain is Cytochrome c-550 (136 aa).

Residues 1–28 (MTKLTFGALVALAMTAAASTAMSSKAMA) form the signal peptide. Heme c is bound by residues Cys-41, Cys-44, His-45, and Met-107.

Binds 1 heme c group covalently per subunit. In terms of processing, the N-terminus is blocked.

The protein localises to the periplasm. Functionally, plays a role in bacteroid respiration under conditions of oxygen limitation. Required for electron-transfer during denitrification. This is Cytochrome c-550 (cycA) from Bradyrhizobium diazoefficiens (strain JCM 10833 / BCRC 13528 / IAM 13628 / NBRC 14792 / USDA 110).